Here is a 93-residue protein sequence, read N- to C-terminus: DNA-directed RNA polymerase subunit omega (93 aa).

The protein belongs to the RNA polymerase subunit omega family. The RNAP catalytic core consists of 2 alpha, 1 beta, 1 beta' and 1 omega subunit. When a sigma factor is associated with the core the holoenzyme is formed, which can initiate transcription.

It catalyses the reaction RNA(n) + a ribonucleoside 5'-triphosphate = RNA(n+1) + diphosphate. Functionally, promotes RNA polymerase assembly. Latches the N- and C-terminal regions of the beta' subunit thereby facilitating its interaction with the beta and alpha subunits. In Actinobacillus pleuropneumoniae serotype 7 (strain AP76), this protein is DNA-directed RNA polymerase subunit omega.